The primary structure comprises 435 residues: Methylenetetrahydrofolate--tRNA-(uracil-5-)-methyltransferase TrmFO (435 aa).

10–15 (GAGLAG) lines the FAD pocket.

Belongs to the MnmG family. TrmFO subfamily. The cofactor is FAD.

The protein localises to the cytoplasm. It carries out the reaction uridine(54) in tRNA + (6R)-5,10-methylene-5,6,7,8-tetrahydrofolate + NADH + H(+) = 5-methyluridine(54) in tRNA + (6S)-5,6,7,8-tetrahydrofolate + NAD(+). The catalysed reaction is uridine(54) in tRNA + (6R)-5,10-methylene-5,6,7,8-tetrahydrofolate + NADPH + H(+) = 5-methyluridine(54) in tRNA + (6S)-5,6,7,8-tetrahydrofolate + NADP(+). In terms of biological role, catalyzes the folate-dependent formation of 5-methyl-uridine at position 54 (M-5-U54) in all tRNAs. The chain is Methylenetetrahydrofolate--tRNA-(uracil-5-)-methyltransferase TrmFO from Halalkalibacterium halodurans (strain ATCC BAA-125 / DSM 18197 / FERM 7344 / JCM 9153 / C-125) (Bacillus halodurans).